The primary structure comprises 1669 residues: Collagen alpha-1(IV) chain (1669 aa).

A signal peptide spans 1–27 (MGPRLGVWLLLLLAALLLHEESSRAAA). Positions 28-172 (KGGCAGSGCG…LGHIPGTLLK (145 aa)) are cleaved as a propeptide — N-terminal propeptide (7S domain). Residues 50-1445 (ERGLPGLQGV…PPGTPSVDHG (1396 aa)) form a disordered region. The triple-helical region stretch occupies residues 173–1440 (GERGYPGQPG…PGSMGPPGTP (1268 aa)). The span at 196–214 (VGPPGFTGPPGPPGPPGPP) shows a compositional bias: pro residues. 3-hydroxyproline is present on residues proline 204, proline 207, and proline 210. Basic and acidic residues-rich tracts occupy residues 254-263 (TAMRGEKGQK) and 289-298 (PGKDGEKGEK). The span at 347 to 356 (GYPGGPGAKG) shows a compositional bias: gly residues. Residues 357–366 (ETGPKGFPGI) are compositionally biased toward low complexity. Positions 367 to 376 (PGQPGPPGFP) are enriched in pro residues. The segment covering 396-412 (PGLPGVSLPGPSGRDGL) has biased composition (low complexity). Pro residues-rich tracts occupy residues 413–424 (PGPPGPPGPPGQ) and 436–448 (PGPPGDQGPPGIP). Low complexity predominate over residues 485–494 (PGEIGFPGQP). 2 stretches are compositionally biased toward basic and acidic residues: residues 497–508 (KGDRGLPGRDGL) and 535–545 (FDIRLKGDKGD). Residues 586–595 (GPPGGVGFPG) show a composition bias toward gly residues. 3-hydroxyproline is present on residues proline 587 and proline 602. Position 603 is a 4-hydroxyproline (proline 603). 3-hydroxyproline is present on proline 605. 5 positions are modified to 4-hydroxyproline: proline 606, proline 623, proline 626, proline 629, and proline 632. Proline 647 carries the 3-hydroxyproline modification. Gly residues-rich tracts occupy residues 758 to 767 (GNVGGPGIPG) and 797 to 817 (GVPGIGPPGAMGPPGGQGPPG). Residues 847 to 871 (SQGLPGLTGQSGLPGLPGQQGTPGQ) show a composition bias toward low complexity. Over residues 937-955 (SMDKVDMGSMKGEKGDQGE) the composition is skewed to basic and acidic residues. Residues 1011 to 1020 (GSAGGMGLPG) are compositionally biased toward gly residues. Low complexity-rich tracts occupy residues 1030–1040 (IPGPQGIPGLP), 1101–1114 (SPGSVGYPGSPGLP), and 1193–1212 (FPGLSGSPGIPGSKGEQGFM). The residue at position 1214 (proline 1214) is a 3-hydroxyproline. Residues 1247-1258 (PGRPGPMGPPGL) are compositionally biased toward pro residues. The segment covering 1290 to 1299 (GMPGIGGSPG) has biased composition (gly residues). The segment covering 1413–1428 (FGPPGPRGFPGPPGPD) has biased composition (pro residues). The residue at position 1424 (proline 1424) is a 3-hydroxyproline. In terms of domain architecture, Collagen IV NC1 spans 1445–1669 (GFLVTRHSQT…SRCQVCMRRT (225 aa)). 6 disulfides stabilise this stretch: cysteine 1460–cysteine 1551, cysteine 1493–cysteine 1548, cysteine 1505–cysteine 1511, cysteine 1570–cysteine 1665, cysteine 1604–cysteine 1662, and cysteine 1616–cysteine 1622. An S-Lysyl-methionine sulfilimine (Met-Lys) (interchain with K-1651) cross-link involves residue methionine 1533. Lysine 1651 is covalently cross-linked (S-Lysyl-methionine sulfilimine (Lys-Met) (interchain with M-1533)).

This sequence belongs to the type IV collagen family. As to quaternary structure, there are six type IV collagen isoforms, alpha 1(IV)-alpha 6(IV), each of which can form a triple helix structure with 2 other chains to generate type IV collagen network. Interacts with EFEMP2. Lysines at the third position of the tripeptide repeating unit (G-X-Y) are hydroxylated in all cases. The modified lysines can be O-glycosylated. In terms of processing, contains 4-hydroxyproline. Prolines at the third position of the tripeptide repeating unit (G-X-Y) are hydroxylated in some or all of the chains. Post-translationally, contains 3-hydroxyproline. This modification occurs on the first proline residue in the sequence motif Gly-Pro-Hyp, where Hyp is 4-hydroxyproline. Type IV collagens contain numerous cysteine residues which are involved in inter- and intramolecular disulfide bonding. 12 of these, located in the NC1 domain, are conserved in all known type IV collagens. In terms of processing, the trimeric structure of the NC1 domains is stabilized by covalent bonds (sulfilimine cross-links) between Lys and Met residues. These cross-links are important for the mechanical stability of the basement membrane. Sulfilimine cross-link is catalyzed by PXDN. Post-translationally, proteolytic processing produces the C-terminal NC1 peptide, arresten.

The protein localises to the secreted. It localises to the extracellular space. The protein resides in the extracellular matrix. Its subcellular location is the basement membrane. In terms of biological role, type IV collagen is the major structural component of glomerular basement membranes (GBM), forming a 'chicken-wire' meshwork together with laminins, proteoglycans and entactin/nidogen. Functionally, arresten, comprising the C-terminal NC1 domain, inhibits angiogenesis and tumor formation. The C-terminal half is found to possess the anti-angiogenic activity. Specifically inhibits endothelial cell proliferation, migration and tube formation. This chain is Collagen alpha-1(IV) chain, found in Bos taurus (Bovine).